Here is a 473-residue protein sequence, read N- to C-terminus: Proline transporter 1 (473 aa).

The span at 1-11 shows a compositional bias: basic and acidic residues; it reads MDQHQLDEENQ. The segment at 1–31 is disordered; the sequence is MDQHQLDEENQRAALFHSSAPSSSLGADGEE. 11 helical membrane-spanning segments follow: residues 65–85, 88–108, 145–165, 188–208, 210–230, 252–272, 290–310, 333–353, 378–398, 401–421, and 437–457; these read PWYQVGFILTTGVNSAYVLGY, SIMVPLGWIGGTCGLILAAAI, LTWALQYVNLFMINTGLIILA, IALSGFVCALFAFGIPYLSAL, IWLGLSTVFSLIYIMIAFVMS, IFTTIGAVANLVFAYNTGMLP, LWFQFTVGSLPLYAVTFMGYW, VANLSAFLQTVIALHIFASPM, VGVRGGYLTVNTLVAAMLPFL, FMSLTGALSTFPLTFVLANHM, and WHWLNVVGFSCLSVAAAVAAV.

It belongs to the amino acid/polyamine transporter 2 family. Amino acid/auxin permease (AAAP) (TC 2.A.18.3) subfamily. In terms of tissue distribution, expressed in roots, leaf blades and sheaths, stems and young panicle.

The protein resides in the cell membrane. Its function is as follows. Proline transporter that mediates proline transport across the plasma membrane when expressed in a heterologous system (Xenopus oocytes). The polypeptide is Proline transporter 1 (PROT1) (Oryza sativa subsp. japonica (Rice)).